We begin with the raw amino-acid sequence, 1434 residues long: DNA-directed RNA polymerase subunit beta (1434 aa).

It belongs to the RNA polymerase beta chain family. In terms of assembly, the RNAP catalytic core consists of 2 alpha, 1 beta, 1 beta' and 1 omega subunit. When a sigma factor is associated with the core the holoenzyme is formed, which can initiate transcription.

It carries out the reaction RNA(n) + a ribonucleoside 5'-triphosphate = RNA(n+1) + diphosphate. DNA-dependent RNA polymerase catalyzes the transcription of DNA into RNA using the four ribonucleoside triphosphates as substrates. The polypeptide is DNA-directed RNA polymerase subunit beta (Ureaplasma parvum serovar 3 (strain ATCC 27815 / 27 / NCTC 11736)).